Reading from the N-terminus, the 202-residue chain is Nucleoside triphosphate pyrophosphatase (202 aa).

D79 serves as the catalytic Proton acceptor.

This sequence belongs to the Maf family. The cofactor is a divalent metal cation.

Its subcellular location is the cytoplasm. The enzyme catalyses a ribonucleoside 5'-triphosphate + H2O = a ribonucleoside 5'-phosphate + diphosphate + H(+). The catalysed reaction is a 2'-deoxyribonucleoside 5'-triphosphate + H2O = a 2'-deoxyribonucleoside 5'-phosphate + diphosphate + H(+). Nucleoside triphosphate pyrophosphatase. May have a dual role in cell division arrest and in preventing the incorporation of modified nucleotides into cellular nucleic acids. This Rhodopseudomonas palustris (strain BisB18) protein is Nucleoside triphosphate pyrophosphatase.